The chain runs to 122 residues: uncharacterized protein (122 aa).

This is an uncharacterized protein from Escherichia coli (strain K12).